The primary structure comprises 356 residues: Phosphoribosyl pyrophosphate synthase-associated protein 1 (356 aa).

M1 carries the post-translational modification N-acetylmethionine. Phosphoserine is present on residues S177 and S215.

Belongs to the ribose-phosphate pyrophosphokinase family. In terms of assembly, binds to PRPS1 and PRPS2. Ubiquitous.

Its function is as follows. Seems to play a negative regulatory role in 5-phosphoribose 1-diphosphate synthesis. The polypeptide is Phosphoribosyl pyrophosphate synthase-associated protein 1 (Prpsap1) (Rattus norvegicus (Rat)).